Consider the following 154-residue polypeptide: dCTP deaminase (154 aa).

Residues 79–84 (RSSLAR), Asp-95, Gln-124, and Tyr-138 each bind dCTP.

Belongs to the dCTP deaminase family. Homotrimer.

The enzyme catalyses dCTP + H2O + H(+) = dUTP + NH4(+). The protein operates within pyrimidine metabolism; dUMP biosynthesis; dUMP from dCTP (dUTP route): step 1/2. In terms of biological role, catalyzes the deamination of dCTP to dUTP. In Pyrococcus abyssi (strain GE5 / Orsay), this protein is dCTP deaminase.